The chain runs to 217 residues: 7-cyano-7-deazaguanine synthase (217 aa).

7-17 (LSGGMDSTTLL) contacts ATP. Cys-183, Cys-191, Cys-194, and Cys-197 together coordinate Zn(2+).

Belongs to the QueC family. Zn(2+) serves as cofactor.

The catalysed reaction is 7-carboxy-7-deazaguanine + NH4(+) + ATP = 7-cyano-7-deazaguanine + ADP + phosphate + H2O + H(+). It participates in purine metabolism; 7-cyano-7-deazaguanine biosynthesis. In terms of biological role, catalyzes the ATP-dependent conversion of 7-carboxy-7-deazaguanine (CDG) to 7-cyano-7-deazaguanine (preQ(0)). The polypeptide is 7-cyano-7-deazaguanine synthase (Methanoregula boonei (strain DSM 21154 / JCM 14090 / 6A8)).